The sequence spans 157 residues: MSIEVNNESGVEVDEAGLVALSRYIFEQLYIHPQAELSILLVDEPAMEKLHIELMDEPGATDVLSVPMDDLTPGTPDRPTPQGMLGDIAICPQVAQVQAKNAGHALQDEMLLLTTHGILHLLGYDHAEPEEKEEMFGLQRELLTGFTGKEAPAETTQ.

Positions 116, 120, and 126 each coordinate Zn(2+).

This sequence belongs to the endoribonuclease YbeY family. Zn(2+) is required as a cofactor.

The protein resides in the cytoplasm. Functionally, single strand-specific metallo-endoribonuclease involved in late-stage 70S ribosome quality control and in maturation of the 3' terminus of the 16S rRNA. This chain is Endoribonuclease YbeY, found in Pseudarthrobacter chlorophenolicus (strain ATCC 700700 / DSM 12829 / CIP 107037 / JCM 12360 / KCTC 9906 / NCIMB 13794 / A6) (Arthrobacter chlorophenolicus).